A 427-amino-acid chain; its full sequence is 12-alpha,13-alpha-dihydroxyfumitremorgin C prenyltransferase (427 aa).

E94 is a substrate binding site. Residues R105, K192, Y194, Y268, Q353, Y355, Y419, and Y423 each contribute to the dimethylallyl diphosphate site.

Belongs to the tryptophan dimethylallyltransferase family.

The enzyme catalyses 12alpha,13alpha-dihydroxyfumitremorgin C + dimethylallyl diphosphate = fumitremorgin B + diphosphate. Its pathway is mycotoxin biosynthesis. Its function is as follows. 12-alpha,13-alpha-dihydroxyfumitremorgin C prenyltransferase; part of the gene cluster that mediates the biosynthesis of fumitremorgins, indole alkaloids that carry not only intriguing chemical structures, but also interesting biological and pharmacological activities. The biosynthesis of fumitremorgin-type alkaloids begins by condensation of the two amino acids L-tryptophan and L-proline to brevianamide F, catalyzed by the non-ribosomal peptide synthetase ftmA. Brevianamide F is then prenylated by the prenyltransferase ftmPT1/ftmB in the presence of dimethylallyl diphosphate, resulting in the formation of tryprostatin B. The three cytochrome P450 monooxygenases, ftmP450-1/ftmC, ftmP450-2/ftmE and ftmP450-3/FtmG, are responsible for the conversion of tryprostatin B to 6-hydroxytryprostatin B, tryprostatin A to fumitremorgin C and fumitremorgin C to 12,13-dihydroxyfumitremorgin C, respectively. The putative methyltransferase ftmMT/ftmD is expected for the conversion of 6-hydroxytryprostatin B to tryprostatin A. FtmPT2/FtmH catalyzes the prenylation of 12,13-dihydroxyfumitre-morgin C in the presence of dimethylallyl diphosphate, resulting in the formation of fumitremorgin B. Fumitremorgin B is further converted to verruculogen by ftmOx1/ftmF via the insertion of an endoperoxide bond between the two prenyl moieties. In some fungal species, verruculogen is further converted to fumitremorgin A, but the enzymes involved in this step have not been identified yet. The protein is 12-alpha,13-alpha-dihydroxyfumitremorgin C prenyltransferase of Aspergillus fumigatus (strain ATCC MYA-4609 / CBS 101355 / FGSC A1100 / Af293) (Neosartorya fumigata).